The sequence spans 116 residues: Iron-sulfur cluster insertion protein ErpA (116 aa).

Iron-sulfur cluster is bound by residues cysteine 44, cysteine 108, and cysteine 110.

This sequence belongs to the HesB/IscA family. As to quaternary structure, homodimer. The cofactor is iron-sulfur cluster.

Required for insertion of 4Fe-4S clusters for at least IspG. The protein is Iron-sulfur cluster insertion protein ErpA of Shewanella sp. (strain ANA-3).